The following is a 244-amino-acid chain: U4/U6.U5 tri-snRNP-associated protein 3-like protein C162.01c (244 aa).

Basic and acidic residues-rich tracts occupy residues 1 to 11 (MSSSRSGEHRR) and 20 to 116 (ESSR…RRDG). 2 disordered regions span residues 1-192 (MSSS…EDEA) and 223-244 (KKTK…LDNE). 2 positions are modified to phosphoserine: serine 121 and serine 140. Residues 126–182 (GLERKREHEKLQAPSPKEEEERPVDQGDKMDGVKEDKDGSLEVGKSHDAMTRTKSAE) show a composition bias toward basic and acidic residues. A compositionally biased stretch (acidic residues) spans 183-192 (EEIVEQEDEA).

Belongs to the SNUT3 family. In terms of assembly, part of a tri-snRNP complex.

It localises to the nucleus. May play a role in mRNA splicing. This is U4/U6.U5 tri-snRNP-associated protein 3-like protein C162.01c from Schizosaccharomyces pombe (strain 972 / ATCC 24843) (Fission yeast).